Here is a 498-residue protein sequence, read N- to C-terminus: ATP synthase subunit beta, chloroplastic (498 aa).

An ATP-binding site is contributed by 172–179 (GGAGVGKT).

The protein belongs to the ATPase alpha/beta chains family. F-type ATPases have 2 components, CF(1) - the catalytic core - and CF(0) - the membrane proton channel. CF(1) has five subunits: alpha(3), beta(3), gamma(1), delta(1), epsilon(1). CF(0) has four main subunits: a(1), b(1), b'(1) and c(9-12).

Its subcellular location is the plastid. The protein resides in the chloroplast thylakoid membrane. It catalyses the reaction ATP + H2O + 4 H(+)(in) = ADP + phosphate + 5 H(+)(out). In terms of biological role, produces ATP from ADP in the presence of a proton gradient across the membrane. The catalytic sites are hosted primarily by the beta subunits. The chain is ATP synthase subunit beta, chloroplastic from Populus tremuloides (Quaking aspen).